A 214-amino-acid polypeptide reads, in one-letter code: MASVPCSFKLSAHRRSSSKLDGNNKQCSSLVERLRDKTKSQVPKSITCINRLEISRIAPLHATMNSPKGFGPPPKKTKKSKKPKPGNQSDEDDDDEDEDDDDEEDERERGVIPEIVTNRMISRMGFTVGLPLFIGLLFFPFFYYLKVGLKVDVPTWVPFIVSFVFFGTALAGVSYGIVSSSWDPLREGSLLGWNEAKKNWPVFWQSFWNSSDKR.

Disordered stretches follow at residues 1–26 (MASVPCSFKLSAHRRSSSKLDGNNKQ) and 62–111 (ATMN…ERGV). Residues 1–35 (MASVPCSFKLSAHRRSSSKLDGNNKQCSSLVERLR) constitute a chloroplast transit peptide. Residues 36-124 (DKTKSQVPKS…IVTNRMISRM (89 aa)) lie on the Stromal side of the membrane. Positions 75–84 (KKTKKSKKPK) are enriched in basic residues. Residues 89–106 (SDEDDDDEDEDDDDEEDE) are compositionally biased toward acidic residues. Residues 125–145 (GFTVGLPLFIGLLFFPFFYYL) traverse the membrane as a helical segment. The Lumenal, thylakoid segment spans residues 146–152 (KVGLKVD). The helical transmembrane segment at 153 to 173 (VPTWVPFIVSFVFFGTALAGV) threads the bilayer. Residues 174-214 (SYGIVSSSWDPLREGSLLGWNEAKKNWPVFWQSFWNSSDKR) are Stromal-facing.

In terms of assembly, interacts with the PSII subunits psbA, psbB, psbC, psbD, psbH and psbI, but not with psbE, psbF or psbO. Interacts with the PSII assembly factors HCF136, LPA1, LPA2 and ALB3.

The protein localises to the plastid. It is found in the chloroplast thylakoid membrane. Functionally, involved in early steps in photosystem II (PSII) biogenesis and in maturation and stability of newly synthesized psbA protein. In Arabidopsis thaliana (Mouse-ear cress), this protein is Protein PAM68, chloroplastic (PAM68).